The primary structure comprises 630 residues: E3 ubiquitin-protein ligase TRIM41 (630 aa).

The segment at 20–61 (CAICLDYFTDPVSIGCGHNFCRVCVTQLWGGEDEEDRDELDR) adopts an RING-type; degenerate zinc-finger fold. Residues 51-75 (EDEEDRDELDREEEEEEVGEEEEVE) are compositionally biased toward acidic residues. Disordered regions lie at residues 51-97 (EDEE…GDME) and 148-176 (EDED…PPPA). A Phosphothreonine modification is found at Thr-85. Residues 148 to 166 (EDEDEEEEVLEEDEEEELD) show a composition bias toward acidic residues. A B box-type zinc finger spans residues 222-263 (NEQGICPRHQEALKLFCEVDEEAICVVCRESRSHKQHSVVPL). The Zn(2+) site is built by Cys-227, His-230, Cys-249, and His-255. Residue Lys-256 forms a Glycyl lysine isopeptide (Lys-Gly) (interchain with G-Cter in SUMO2) linkage. Residues 281-374 (LRKHLEAVQK…AEAQERSQQG (94 aa)) are a coiled coil. Residues 413–630 (LTDAIVRKMS…SKGTRIKLCP (218 aa)) enclose the B30.2/SPRY domain. A Phosphoserine modification is found at Ser-447. Positions 503–535 (ARESTHHKEKVGSGGSSVSSGDASSSRHHHRRR) are disordered.

Belongs to the TRIM/RBCC family. As to quaternary structure, interacts with PRKCA. Interacts with NOD2. Interacts with TRIM17; this interaction prevents TRIM41 activity on ZSCAN2. Post-translationally, auto-ubiquitinated.

The protein resides in the cytoplasm. It is found in the nucleus. The enzyme catalyses S-ubiquitinyl-[E2 ubiquitin-conjugating enzyme]-L-cysteine + [acceptor protein]-L-lysine = [E2 ubiquitin-conjugating enzyme]-L-cysteine + N(6)-ubiquitinyl-[acceptor protein]-L-lysine.. It participates in protein modification; protein ubiquitination. Functionally, E3 ligase that plays essential roles in innate antiviral response. Directly binds to influenza A virus or vesicular stomatitis virus nucleoproteins and targets them for ubiquitination and proteasomal degradation, thereby limiting viral infections. Activates the innate antiviral response by catalyzing monoubiquitination of CGAS, thereby activating CGAS. Also involved in innate antiviral response by mediating 'Lys-63'-linked polyubiquitylation of BCL10 which in turn hubs NEMO for activation of NF-kappa-B and IRF3 pathways. Catalyzes the ubiquitin-mediated degradation of other substrates including protein kinase C, ZSCAN21 or TOP3B suggesting additional roles besides its function in immune response. This chain is E3 ubiquitin-protein ligase TRIM41, found in Mus musculus (Mouse).